We begin with the raw amino-acid sequence, 434 residues long: Chaperone SurA (434 aa).

An N-terminal signal peptide occupies residues 1-29; sequence MKTLRLNFRSAILKALGALLLLQGCLAHA. PpiC domains lie at 180–281 and 290–389; these read AEEY…AMLE and VEQS…QVQD.

It localises to the periplasm. It catalyses the reaction [protein]-peptidylproline (omega=180) = [protein]-peptidylproline (omega=0). Chaperone involved in the correct folding and assembly of outer membrane proteins. Recognizes specific patterns of aromatic residues and the orientation of their side chains, which are found more frequently in integral outer membrane proteins. May act in both early periplasmic and late outer membrane-associated steps of protein maturation. This Hahella chejuensis (strain KCTC 2396) protein is Chaperone SurA.